We begin with the raw amino-acid sequence, 214 residues long: Adenylate kinase (214 aa).

14 to 19 (GSGKGT) lines the ATP pocket. An NMP region spans residues 32 to 61 (SVGKVLRTVMESNTAEADVVKKFIKSGKLV). Residues Arg-38, 59–61 (KLV), 87–90 (GYPR), and Gln-94 each bind AMP. Residues 124-162 (GRISCTDCGTIYNKLYCMPKINGVCDICNSSSFQNRVDD) are LID. Arg-125 is an ATP binding site. 2 residues coordinate Zn(2+): Cys-128 and Cys-131. 134–135 (IY) provides a ligand contact to ATP. Zn(2+)-binding residues include Cys-148 and Cys-151. Residues Arg-159 and Arg-170 each coordinate AMP. Gln-198 is an ATP binding site.

The protein belongs to the adenylate kinase family. As to quaternary structure, monomer.

It is found in the cytoplasm. It carries out the reaction AMP + ATP = 2 ADP. Its pathway is purine metabolism; AMP biosynthesis via salvage pathway; AMP from ADP: step 1/1. Its function is as follows. Catalyzes the reversible transfer of the terminal phosphate group between ATP and AMP. Plays an important role in cellular energy homeostasis and in adenine nucleotide metabolism. The protein is Adenylate kinase of Orientia tsutsugamushi (strain Ikeda) (Rickettsia tsutsugamushi).